Reading from the N-terminus, the 447-residue chain is GTPase Der (447 aa).

EngA-type G domains lie at 3-167 (PVIA…HLAD) and 180-353 (IRLA…ASAN). GTP-binding positions include 9 to 16 (GRPNVGKS), 56 to 60 (DTGGF), 119 to 122 (NKAE), 186 to 193 (GRPNVGKS), 233 to 237 (DTAGL), and 298 to 301 (NKWD). Residues 354-438 (RKMSTPVLTR…PMRIQMKSSH (85 aa)) form the KH-like domain.

The protein belongs to the TRAFAC class TrmE-Era-EngA-EngB-Septin-like GTPase superfamily. EngA (Der) GTPase family. In terms of assembly, associates with the 50S ribosomal subunit.

Its function is as follows. GTPase that plays an essential role in the late steps of ribosome biogenesis. The sequence is that of GTPase Der from Polaromonas sp. (strain JS666 / ATCC BAA-500).